The following is a 374-amino-acid chain: uncharacterized protein (374 aa).

Aspartate 158, histidine 160, aspartate 190, asparagine 221, histidine 312, and histidine 314 together coordinate a divalent metal cation.

This sequence belongs to the metallophosphoesterase superfamily. It depends on a divalent metal cation as a cofactor.

This is an uncharacterized protein from Campylobacter jejuni subsp. jejuni serotype O:2 (strain ATCC 700819 / NCTC 11168).